An 876-amino-acid polypeptide reads, in one-letter code: Vacuolar protein sorting-associated protein 39 homolog (876 aa).

The region spanning 14–310 is the CNH domain; it reads GVQIESIAAY…KFLVHADKGT (297 aa). One copy of the CHCR repeat lies at 578 to 741; it reads ELIEVESLPR…ILIPPTQPLY (164 aa).

This sequence belongs to the VAM6/VPS39 family. Part of the homotypic fusion and vacuole protein sorting (HOPS) complex, composed of Vps16A, car/Vps33A, dor/Vps18, Vps39, Vps11 and lt/Vps41. Interacts with Rab2 (GTP-bound form); the interaction is probably direct.

The protein resides in the cytoplasm. Its subcellular location is the lysosome membrane. The protein localises to the late endosome membrane. It localises to the late endosome. It is found in the lysosome. Its function is as follows. Part of the homotypic fusion and vacuole protein sorting (HOPS) tethering complex involved in endo-lysosomal vesicle trafficking and lysosome biogenesis. The HOPS complex facilitates docking and fusion of lysosomes with late endosomes and several other types of vesicles. The HOPS complex is also involved in autophagy and crinophagy (the elimination of unused secretory granules through their fusion with lysosomes). The HOPS complex mediates autophagocitic flux, probably by binding autophagosome-associated Syx17/syntaxin 17, promoting assembly of the trans-SNARE complex and instigating autophagosome-lysosome fusion. Independent of Syx17/syntaxin 17, HOPS is involved in biosynthetic transport to lysosomes and lysosome-related organelles such as eye-pigment granules. Required for autophagocytosis-dependent remodeling of myofibrils and transverse-tubules (T-tubules) during metamorphosis. The sequence is that of Vacuolar protein sorting-associated protein 39 homolog from Drosophila melanogaster (Fruit fly).